Here is a 99-residue protein sequence, read N- to C-terminus: Carboxysome shell vertex protein CcmL (99 aa).

The 83-residue stretch at 1-83 (MKIARVCGTV…IDAAVVAIID (83 aa)) folds into the BMV domain.

The protein belongs to the CcmL/EutN family. CcmL subfamily. As to quaternary structure, homopentamer. May interact with CcmK2, this occurs at very high CcmK2 concentrations. Interacts with full-length CcmM.

The protein resides in the carboxysome. In terms of biological role, probably forms vertices in the carboxysome, a polyhedral inclusion where RuBisCO (ribulose bisphosphate carboxylase, rbcL-rbcS) is sequestered. Has been modeled to induce curvature upon insertion into an otherwise flat hexagonal molecular layer of CcmK subunits. This Thermosynechococcus vestitus (strain NIES-2133 / IAM M-273 / BP-1) protein is Carboxysome shell vertex protein CcmL.